Reading from the N-terminus, the 161-residue chain is Endoribonuclease YbeY (161 aa).

3 residues coordinate Zn(2+): histidine 127, histidine 131, and histidine 137.

This sequence belongs to the endoribonuclease YbeY family. The cofactor is Zn(2+).

The protein localises to the cytoplasm. In terms of biological role, single strand-specific metallo-endoribonuclease involved in late-stage 70S ribosome quality control and in maturation of the 3' terminus of the 16S rRNA. This chain is Endoribonuclease YbeY, found in Listeria monocytogenes serotype 4b (strain CLIP80459).